The following is a 361-amino-acid chain: Anthranilate phosphoribosyltransferase (361 aa).

Residues glycine 101, 104 to 105 (GD), threonine 109, 111 to 114 (NIST), 129 to 137 (KHGNRGVSS), and serine 141 each bind 5-phospho-alpha-D-ribose 1-diphosphate. Glycine 101 contributes to the anthranilate binding site. Serine 113 provides a ligand contact to Mg(2+). An anthranilate-binding site is contributed by asparagine 132. Residue arginine 187 coordinates anthranilate. The Mg(2+) site is built by aspartate 245 and glutamate 246.

It belongs to the anthranilate phosphoribosyltransferase family. In terms of assembly, homodimer. It depends on Mg(2+) as a cofactor.

It catalyses the reaction N-(5-phospho-beta-D-ribosyl)anthranilate + diphosphate = 5-phospho-alpha-D-ribose 1-diphosphate + anthranilate. The protein operates within amino-acid biosynthesis; L-tryptophan biosynthesis; L-tryptophan from chorismate: step 2/5. Catalyzes the transfer of the phosphoribosyl group of 5-phosphorylribose-1-pyrophosphate (PRPP) to anthranilate to yield N-(5'-phosphoribosyl)-anthranilate (PRA). The chain is Anthranilate phosphoribosyltransferase from Shewanella denitrificans (strain OS217 / ATCC BAA-1090 / DSM 15013).